The sequence spans 30 residues: Cyclotide hypa-A (30 aa).

Residues 1-30 (GIPCAESCVYIPCTITALLGCSCKNKVCYN) constitute a cross-link (cyclopeptide (Gly-Asn)). 3 disulfides stabilise this stretch: C4–C21, C8–C23, and C13–C28.

In terms of processing, this is a cyclic peptide.

In terms of biological role, probably participates in a plant defense mechanism. This chain is Cyclotide hypa-A, found in Pombalia parviflora (Violetilla).